The primary structure comprises 32 residues: Potassium channel toxin alpha-KTx 9.4 (32 aa).

Cystine bridges form between Cys-3–Cys-19, Cys-6–Cys-24, and Cys-10–Cys-26.

As to expression, expressed by the venom gland.

Its subcellular location is the secreted. Its function is as follows. Blocker of human voltage-gated potassium channel Kv1.1/KCNA1. The protein is Potassium channel toxin alpha-KTx 9.4 of Hottentotta tamulus (Eastern Indian scorpion).